A 101-amino-acid polypeptide reads, in one-letter code: NADH-quinone oxidoreductase subunit K (101 aa).

3 helical membrane-spanning segments follow: residues 4–24 (LAHY…GIFL), 30–50 (IVLL…FVAF), and 61–81 (VFVF…LAIL).

The protein belongs to the complex I subunit 4L family. NDH-1 is composed of 14 different subunits. Subunits NuoA, H, J, K, L, M, N constitute the membrane sector of the complex.

The protein resides in the cell inner membrane. It catalyses the reaction a quinone + NADH + 5 H(+)(in) = a quinol + NAD(+) + 4 H(+)(out). In terms of biological role, NDH-1 shuttles electrons from NADH, via FMN and iron-sulfur (Fe-S) centers, to quinones in the respiratory chain. The immediate electron acceptor for the enzyme in this species is believed to be ubiquinone. Couples the redox reaction to proton translocation (for every two electrons transferred, four hydrogen ions are translocated across the cytoplasmic membrane), and thus conserves the redox energy in a proton gradient. In Ralstonia nicotianae (strain ATCC BAA-1114 / GMI1000) (Ralstonia solanacearum), this protein is NADH-quinone oxidoreductase subunit K.